Here is a 625-residue protein sequence, read N- to C-terminus: Procollagen galactosyltransferase 2 (625 aa).

Positions 1–26 are cleaved as a signal peptide; that stretch reads MAARLATVACALFLLSSALLRLGCRA. N-linked (GlcNAc...) asparagine glycans are attached at residues Asn-96, Asn-184, Asn-381, and Asn-579. A disordered region spans residues 597 to 625; that stretch reads QGHIRSTAKNTEALPPPTSLDTVPSRDEL. The short motif at 622-625 is the Prevents secretion from ER element; the sequence is RDEL.

Belongs to the glycosyltransferase 25 family.

Its subcellular location is the endoplasmic reticulum lumen. It carries out the reaction (5R)-5-hydroxy-L-lysyl-[collagen] + UDP-alpha-D-galactose = (5R)-5-O-(beta-D-galactosyl)-5-hydroxy-L-lysyl-[collagen] + UDP + H(+). Beta-galactosyltransferase that transfers beta-galactose to hydroxylysine residues of collagen. This chain is Procollagen galactosyltransferase 2 (Colgalt2), found in Mus musculus (Mouse).